Here is a 380-residue protein sequence, read N- to C-terminus: MYG1 exonuclease (380 aa).

Residues 1-46 (MGRRFLRGILTLPLRSVLQAQHRMLGSEQDPPAKRPRNNLMAPPRI) constitute a mitochondrion transit peptide. N6-acetyllysine is present on residues lysine 266 and lysine 272.

Belongs to the MYG1 family. Ubiquitously expressed, with highest levels in testis.

The protein resides in the nucleus. The protein localises to the nucleoplasm. It localises to the mitochondrion matrix. It is found in the nucleolus. 3'-5' RNA exonuclease which cleaves in situ on specific transcripts in both nucleus and mitochondrion. Involved in regulating spatially segregated organellar RNA processing, acts as a coordinator of nucleo-mitochondrial crosstalk. In nucleolus, processes pre-ribosomal RNA involved in ribosome assembly and alters cytoplasmic translation. In mitochondrial matrix, processes 3'-termini of the mito-ribosomal and messenger RNAs and controls translation of mitochondrial proteins. The polypeptide is MYG1 exonuclease (Mus musculus (Mouse)).